Reading from the N-terminus, the 342-residue chain is Foldase protein PrsA (342 aa).

The N-terminal stretch at methionine 1–glycine 22 is a signal peptide. A lipid anchor (N-palmitoyl cysteine) is attached at cysteine 23. Residue cysteine 23 is the site of S-diacylglycerol cysteine attachment. The PpiC domain occupies alanine 190–alanine 284.

Belongs to the PrsA family.

It localises to the cell membrane. It catalyses the reaction [protein]-peptidylproline (omega=180) = [protein]-peptidylproline (omega=0). Its function is as follows. Plays a major role in protein secretion by helping the post-translocational extracellular folding of several secreted proteins. The sequence is that of Foldase protein PrsA from Clostridium perfringens (strain SM101 / Type A).